The sequence spans 168 residues: MASGVMVSDDVIKVFNEMKVRHQLSPEDAKKRKKAVVFCLSDDKKTIILEPGKEILQGDIGCNVEDPYKTFVKMLPRNDCRYALYDALYETKETKKEDLVFVFWAPEEASLKSKMIYASSKDAIKKRLPGIKHEWQINTYEDVNDPCNLADKLGGNTVVSLEGKSVRS.

N-acetylalanine is present on A2. In terms of domain architecture, ADF-H spans 4–153 (GVMVSDDVIK…NDPCNLADKL (150 aa)). A Nuclear localization signal motif is present at residues 30–34 (KKRKK).

The protein belongs to the actin-binding proteins ADF family. Inactive when phosphorylated. Phosphorylation levels vary during development. Oocytes contain only the phosphorylated form, and 80-95% of cfl1 protein is phosphorylated in unfertilized eggs. Rapid dephosphorylation occurs within 30 minutes after fertilization. Phosphorylation levels increase again between the morula and blastula stages (5-8 hpf) and then decrease again as gastrulation approaches. Dephosphorylated by pdxp. Expressed diffusely in both animal and vegetal hemispheres of the oocyte. During cleavage, expression accumulates around the cleavage furrow, along the vegetal membrane, and later in the midbody. Strongly expressed in the animal hemisphere during blastula stages, with most cells showing expression by gastrulation. By stage 17, expression is highest in cells of the developing neuroectoderm, and at stage 24 the notochord, neural tube, neural crest, somites and some cells of the archenteron show high expression. By stage 35, expression has declined in the notochord, but remains in the neural tube, epidermis and a layer of cells in the archenteron. Also highly expressed in the retina and neuronal cell bodies at the base of the cement gland but not the cement gland itself. At stage 38, expression is widespread, being highest in the nervous system and retina. In the adult, expression is high in the brain, heart, oocyte, stomach, and low in skeletal muscle.

It is found in the nucleus matrix. The protein localises to the cytoplasm. Its subcellular location is the cytoskeleton. It localises to the cell cortex. The protein resides in the membrane. In terms of biological role, may play a role in the regulation of cell morphology and cytoskeletal organization. Binds to F-actin and exhibits pH-sensitive F-actin depolymerizing activity. Required for formation of the cleavage furrow during cytokinesis. The chain is Cofilin-1-A (cfl1-a) from Xenopus laevis (African clawed frog).